The primary structure comprises 457 residues: Transmembrane protease serine 5 (457 aa).

The segment at 1 to 21 (MSLMLDDQPPMEAQYAEEGPG) is disordered. The Cytoplasmic segment spans residues 1–49 (MSLMLDDQPPMEAQYAEEGPGPGIFRAEPGDQQHPISQAVCWRSMRRGC). A helical; Signal-anchor for type II membrane protein transmembrane segment spans residues 50–70 (AVLGALGLLAGAGVGSWLLVL). Residues 71–457 (YLCPAASQPI…IHDTAQDSLL (387 aa)) lie on the Extracellular side of the membrane. Positions 112–207 (FRINSEDFLL…SGQVVSLRCS (96 aa)) constitute an SRCR domain. 7 disulfide bridges follow: Cys-135/Cys-196, Cys-148/Cys-206, Cys-209/Cys-328, Cys-243/Cys-259, Cys-342/Cys-411, Cys-374/Cys-390, and Cys-401/Cys-429. Residues Asn-163, Asn-170, and Asn-195 are each glycosylated (N-linked (GlcNAc...) asparagine). The Peptidase S1 domain maps to 218–453 (IVGGQSVAPG…FLDWIHDTAQ (236 aa)). Active-site charge relay system residues include His-258 and Asp-308. Residues Asn-319 and Asn-375 are each glycosylated (N-linked (GlcNAc...) asparagine). Ser-405 functions as the Charge relay system in the catalytic mechanism.

It belongs to the peptidase S1 family. As to expression, brain-specific. Predominantly expressed in neurons, in their axons, and at the synapses of motoneurons in the spinal cord.

It localises to the cell membrane. In terms of biological role, may play a role in hearing. The protein is Transmembrane protease serine 5 (TMPRSS5) of Homo sapiens (Human).